The chain runs to 225 residues: Transcription factor HES-7 (225 aa).

Positions 12–69 (GPKMLKPLVEKRRRDRINRSLEELRLLLLERTRDQNLRNPKLEKAEILEFAVGYLRER) constitute a bHLH domain. Residues 92–122 (YLSGFRECLLRLAAFAHDASPAARAQLFSAL) enclose the Orange domain. The tract at residues 125-225 (YLRPKPPRPK…PPPAFWRPWP (101 aa)) is disordered. Residues 147 to 158 (LDPAAPALGPAL) show a composition bias toward low complexity. Pro residues predominate over residues 212–225 (APLPPPPAFWRPWP). The WRPW motif motif lies at 221-224 (WRPW).

As to quaternary structure, transcription repression requires formation of a complex with a corepressor protein of the Groucho/TLE family.

It is found in the nucleus. Transcriptional repressor. Represses transcription from both N box- and E box-containing promoters. May with HES1, cooperatively regulate somite formation in the presomitic mesoderm (PSM). May function as a segmentation clock, which is essential for coordinated somite segmentation. In Homo sapiens (Human), this protein is Transcription factor HES-7 (HES7).